The following is a 294-amino-acid chain: tRNA pseudouridine synthase B (294 aa).

The Nucleophile role is filled by D39.

Belongs to the pseudouridine synthase TruB family. Type 1 subfamily.

It carries out the reaction uridine(55) in tRNA = pseudouridine(55) in tRNA. Responsible for synthesis of pseudouridine from uracil-55 in the psi GC loop of transfer RNAs. The polypeptide is tRNA pseudouridine synthase B (Streptococcus pyogenes serotype M6 (strain ATCC BAA-946 / MGAS10394)).